The following is a 115-amino-acid chain: Hydrogenase maturation factor HypA (115 aa).

H2 is a binding site for Ni(2+). Zn(2+)-binding residues include C73, C76, C89, and C92.

Belongs to the HypA/HybF family.

Involved in the maturation of [NiFe] hydrogenases. Required for nickel insertion into the metal center of the hydrogenase. This is Hydrogenase maturation factor HypA from Nitrosospira multiformis (strain ATCC 25196 / NCIMB 11849 / C 71).